A 398-amino-acid polypeptide reads, in one-letter code: Acetate kinase (398 aa).

Asparagine 8 is a Mg(2+) binding site. Lysine 15 contacts ATP. Arginine 89 serves as a coordination point for substrate. The Proton donor/acceptor role is filled by aspartate 146. ATP is bound by residues 206-210 (HIGNG), 283-285 (DMR), and 331-335 (GMGEN). Glutamate 383 contacts Mg(2+).

Belongs to the acetokinase family. Homodimer. Mg(2+) is required as a cofactor. It depends on Mn(2+) as a cofactor.

The protein resides in the cytoplasm. It carries out the reaction acetate + ATP = acetyl phosphate + ADP. It participates in metabolic intermediate biosynthesis; acetyl-CoA biosynthesis; acetyl-CoA from acetate: step 1/2. Catalyzes the formation of acetyl phosphate from acetate and ATP. Can also catalyze the reverse reaction. This is Acetate kinase from Streptococcus pyogenes serotype M28 (strain MGAS6180).